A 252-amino-acid polypeptide reads, in one-letter code: Triosephosphate isomerase (252 aa).

9–11 (NWK) serves as a coordination point for substrate. The active-site Electrophile is the H100. Residue E171 is the Proton acceptor of the active site. Residues G177, S216, and 237-238 (GG) each bind substrate.

Belongs to the triosephosphate isomerase family. In terms of assembly, homodimer.

It localises to the cytoplasm. It catalyses the reaction D-glyceraldehyde 3-phosphate = dihydroxyacetone phosphate. Its pathway is carbohydrate biosynthesis; gluconeogenesis. It functions in the pathway carbohydrate degradation; glycolysis; D-glyceraldehyde 3-phosphate from glycerone phosphate: step 1/1. Its function is as follows. Involved in the gluconeogenesis. Catalyzes stereospecifically the conversion of dihydroxyacetone phosphate (DHAP) to D-glyceraldehyde-3-phosphate (G3P). The sequence is that of Triosephosphate isomerase from Polynucleobacter necessarius subsp. necessarius (strain STIR1).